We begin with the raw amino-acid sequence, 113 residues long: Bactofilin BacN (113 aa).

It belongs to the bactofilin family. In terms of assembly, interacts with BacO and BacP, the 3 proteins colocalize as an extended structure.

The protein resides in the cytoplasm. The protein localises to the cytoskeleton. A non-essential component of the chromosome segregation machinery. Positions the ParA-ParB-parS chromosome segregation machinery within the cell; BacP seems to be the most important bactofilin in this process. Forms a heteropolymeric, subpolar scaffold in the cell; BacP probably forms the core, BacO contributes to position and integrity while BacN does not seem to contribute to assembly. The polypeptide is Bactofilin BacN (Myxococcus xanthus (strain DK1622)).